We begin with the raw amino-acid sequence, 399 residues long: Enolase (399 aa).

(2R)-2-phosphoglycerate is bound at residue Gln-152. Glu-194 functions as the Proton donor in the catalytic mechanism. The Mg(2+) site is built by Asp-230, Glu-273, and Asp-301. (2R)-2-phosphoglycerate-binding residues include Lys-326, Arg-355, Ser-356, and Lys-377. Lys-326 functions as the Proton acceptor in the catalytic mechanism.

This sequence belongs to the enolase family. Mg(2+) is required as a cofactor.

It is found in the cytoplasm. Its subcellular location is the secreted. The protein localises to the cell surface. It catalyses the reaction (2R)-2-phosphoglycerate = phosphoenolpyruvate + H2O. It functions in the pathway carbohydrate degradation; glycolysis; pyruvate from D-glyceraldehyde 3-phosphate: step 4/5. Catalyzes the reversible conversion of 2-phosphoglycerate (2-PG) into phosphoenolpyruvate (PEP). It is essential for the degradation of carbohydrates via glycolysis. The polypeptide is Enolase (Methanocorpusculum labreanum (strain ATCC 43576 / DSM 4855 / Z)).